Consider the following 304-residue polypeptide: Sulfate adenylyltransferase subunit 2 (304 aa).

This sequence belongs to the PAPS reductase family. CysD subfamily. In terms of assembly, heterodimer composed of CysD, the smaller subunit, and CysN.

The catalysed reaction is sulfate + ATP + H(+) = adenosine 5'-phosphosulfate + diphosphate. It functions in the pathway sulfur metabolism; hydrogen sulfide biosynthesis; sulfite from sulfate: step 1/3. Its function is as follows. With CysN forms the ATP sulfurylase (ATPS) that catalyzes the adenylation of sulfate producing adenosine 5'-phosphosulfate (APS) and diphosphate, the first enzymatic step in sulfur assimilation pathway. APS synthesis involves the formation of a high-energy phosphoric-sulfuric acid anhydride bond driven by GTP hydrolysis by CysN coupled to ATP hydrolysis by CysD. The polypeptide is Sulfate adenylyltransferase subunit 2 (Acinetobacter baylyi (strain ATCC 33305 / BD413 / ADP1)).